The primary structure comprises 256 residues: Major prion protein (256 aa).

Positions 1-24 (MVKSHIGSWILVLFVAMWSDVGLC) are cleaved as a signal peptide. An interaction with GRB2, ERI3 and SYN1 region spans residues 25 to 233 (KKRPKPGGGW…ESQAYYQRGA (209 aa)). The disordered stretch occupies residues 28 to 110 (PKPGGGWNTG…QWNKPSKPKT (83 aa)). Tandem repeats lie at residues 54-62 (PQGGGGWGQ), 63-70 (PHGGGWGQ), 71-78 (PHGGGWGQ), 79-86 (PHGGGWGQ), and 87-95 (PHGGGGWGQ). The tract at residues 54–95 (PQGGGGWGQPHGGGWGQPHGGGWGQPHGGGWGQPHGGGGWGQ) is 5 X 8 AA tandem repeats of P-H-G-G-G-W-G-Q. Residues 55 to 97 (QGGGGWGQPHGGGWGQPHGGGWGQPHGGGWGQPHGGGGWGQGG) show a composition bias toward gly residues. Cu(2+) contacts are provided by histidine 64, glycine 65, glycine 66, histidine 72, glycine 73, glycine 74, histidine 80, glycine 81, glycine 82, histidine 88, glycine 90, and glycine 91. A disulfide bridge connects residues cysteine 182 and cysteine 217. Residues asparagine 184 and asparagine 200 are each glycosylated (N-linked (GlcNAc...) asparagine). Residue alanine 233 is the site of GPI-anchor amidated alanine attachment. Positions 234–256 (SVILFSSPPVILLISFLIFLIVG) are cleaved as a propeptide — removed in mature form.

It belongs to the prion family. Monomer and homodimer. Has a tendency to aggregate into amyloid fibrils containing a cross-beta spine, formed by a steric zipper of superposed beta-strands. Soluble oligomers may represent an intermediate stage on the path to fibril formation. Copper binding may promote oligomerization. Interacts with GRB2, APP, ERI3/PRNPIP and SYN1. Mislocalized cytosolically exposed PrP interacts with MGRN1; this interaction alters MGRN1 subcellular location and causes lysosomal enlargement. Interacts with KIAA1191.

Its subcellular location is the cell membrane. It localises to the golgi apparatus. In terms of biological role, its primary physiological function is unclear. Has cytoprotective activity against internal or environmental stresses. May play a role in neuronal development and synaptic plasticity. May be required for neuronal myelin sheath maintenance. May play a role in iron uptake and iron homeostasis. Soluble oligomers are toxic to cultured neuroblastoma cells and induce apoptosis (in vitro). Association with GPC1 (via its heparan sulfate chains) targets PRNP to lipid rafts. Also provides Cu(2+) or Zn(2+) for the ascorbate-mediated GPC1 deaminase degradation of its heparan sulfate side chains. The polypeptide is Major prion protein (PRNP) (Budorcas taxicolor (Golden takin)).